Consider the following 753-residue polypeptide: 5-methyltetrahydropteroyltriglutamate--homocysteine methyltransferase (753 aa).

Residues 17-20 and lysine 117 each bind 5-methyltetrahydropteroyltri-L-glutamate; that span reads RELK. Residues 431–433 and glutamate 484 each bind L-homocysteine; that span reads IGS. Residues 431–433 and glutamate 484 each bind L-methionine; that span reads IGS. 5-methyltetrahydropteroyltri-L-glutamate-binding positions include 515–516 and tryptophan 561; that span reads RC. L-homocysteine is bound at residue aspartate 599. Residue aspartate 599 participates in L-methionine binding. Glutamate 605 lines the 5-methyltetrahydropteroyltri-L-glutamate pocket. Histidine 641, cysteine 643, and glutamate 665 together coordinate Zn(2+). The active-site Proton donor is histidine 694. Cysteine 726 lines the Zn(2+) pocket.

Belongs to the vitamin-B12 independent methionine synthase family. Requires Zn(2+) as cofactor.

The catalysed reaction is 5-methyltetrahydropteroyltri-L-glutamate + L-homocysteine = tetrahydropteroyltri-L-glutamate + L-methionine. Its pathway is amino-acid biosynthesis; L-methionine biosynthesis via de novo pathway; L-methionine from L-homocysteine (MetE route): step 1/1. Functionally, catalyzes the transfer of a methyl group from 5-methyltetrahydrofolate to homocysteine resulting in methionine formation. The chain is 5-methyltetrahydropteroyltriglutamate--homocysteine methyltransferase from Escherichia coli O9:H4 (strain HS).